A 936-amino-acid polypeptide reads, in one-letter code: Periplasmic nitrate reductase (936 aa).

Residues 1 to 31 constitute a signal peptide (tat-type signal); it reads MALSRRDFLKSSAAAAAASAVGLSVPKEVEA. Residues 40-96 form the 4Fe-4S Mo/W bis-MGD-type domain; that stretch reads WRWDKAVCRFCGTGCGIMIATKDDRIVAVKGDPLAPVNRGLNCIKGYFTAKIMYGAD. [4Fe-4S] cluster contacts are provided by C47, C50, C54, and C82. Mo-bis(molybdopterin guanine dinucleotide)-binding positions include K84, Q152, N177, C181, 214-221, 246-250, M424, Q428, N534, 559-560, K582, D609, and 826-835; these read WGSNMAEM, STYTH, SD, and TGRVLEHWHS. Residue W902 coordinates substrate. 2 residues coordinate Mo-bis(molybdopterin guanine dinucleotide): N910 and K927.

Belongs to the prokaryotic molybdopterin-containing oxidoreductase family. NasA/NapA/NarB subfamily. Component of the periplasmic nitrate reductase NapAB complex composed of NapA and NapB. [4Fe-4S] cluster is required as a cofactor. Mo-bis(molybdopterin guanine dinucleotide) serves as cofactor. Predicted to be exported by the Tat system. The position of the signal peptide cleavage has not been experimentally proven.

It localises to the periplasm. It catalyses the reaction 2 Fe(II)-[cytochrome] + nitrate + 2 H(+) = 2 Fe(III)-[cytochrome] + nitrite + H2O. Functionally, catalytic subunit of the periplasmic nitrate reductase complex NapAB. Receives electrons from NapB and catalyzes the reduction of nitrate to nitrite. The sequence is that of Periplasmic nitrate reductase from Nitratiruptor sp. (strain SB155-2).